A 453-amino-acid chain; its full sequence is Probable tRNA methyltransferase 9B (453 aa).

S214 is subject to Phosphoserine.

It belongs to the methyltransferase superfamily.

May modify wobble uridines in specific arginine and glutamic acid tRNAs. Acts as a tumor suppressor by promoting the expression of LIN9. This is Probable tRNA methyltransferase 9B (TRMT9B) from Bos taurus (Bovine).